We begin with the raw amino-acid sequence, 828 residues long: Class I hydrophobin hum3 (828 aa).

An N-terminal signal peptide occupies residues 1–22 (MKYLQFLAAVAAVSAFSGPVLA). N-linked (GlcNAc...) asparagine glycosylation is found at asparagine 156, asparagine 222, and asparagine 738. Disulfide bonds link cysteine 750-cysteine 808, cysteine 757-cysteine 802, cysteine 758-cysteine 788, and cysteine 809-cysteine 822. N-linked (GlcNAc...) asparagine glycosylation is present at asparagine 811.

This sequence in the C-terminal section; belongs to the fungal hydrophobin family. As to quaternary structure, self-assembles to form functional amyloid fibrils called rodlets. Self-assembly into fibrillar rodlets occurs spontaneously at hydrophobic:hydrophilic interfaces and the rodlets further associate laterally to form amphipathic monolayers. In terms of processing, hum3 is an atypical hydrophobin that consists in a repetitive repellent-like region that spans 578 aa which is separated from a hydrophobin-like domain by a spacer region containing three possible kex2 processing sites. The repetitive region contains 17 amphipathic repeats of 31-36 aa each of them with a C-terminal putative kex2 processing motif.

It is found in the secreted. It localises to the cell wall. Functionally, aerial growth, conidiation, and dispersal of filamentous fungi in the environment rely upon a capability of their secreting small amphipathic proteins called hydrophobins (HPBs) with low sequence identity. Class I can self-assemble into an outermost layer of rodlet bundles on aerial cell surfaces, conferring cellular hydrophobicity that supports fungal growth, development and dispersal; whereas Class II form highly ordered films at water-air interfaces through intermolecular interactions but contribute nothing to the rodlet structure. Atypical class I hydrophobin that is preceded by a signal sequence and 17 imperfect repeats. The repeated peptides might function as repellents whereas the class I hydrophobin seems not to be crucial for the formation of aerial hyphae. Hydrophobins of Mycosarcoma maydis have been functionally replaced, at least partially, by repellents. Hum3 and rsp1 together are pathogenicity proteins that share an essential function in early stages of the infection. This chain is Class I hydrophobin hum3, found in Mycosarcoma maydis (Corn smut fungus).